We begin with the raw amino-acid sequence, 472 residues long: Sulfate adenylyltransferase subunit 1 (472 aa).

Residues 24-240 (KSLLRFLTCG…ENAEVGTRDL (217 aa)) enclose the tr-type G domain. The G1 stretch occupies residues 33–40 (GSVDDGKS). Position 33–40 (33–40 (GSVDDGKS)) interacts with GTP. The interval 91–95 (GITID) is G2. Positions 112–115 (DTPG) are G3. Residues 112–116 (DTPGH) and 167–170 (NKMD) contribute to the GTP site. Residues 167-170 (NKMD) are G4. A G5 region spans residues 204–206 (SAL).

It belongs to the TRAFAC class translation factor GTPase superfamily. Classic translation factor GTPase family. CysN/NodQ subfamily. Heterodimer composed of CysD, the smaller subunit, and CysN.

It carries out the reaction sulfate + ATP + H(+) = adenosine 5'-phosphosulfate + diphosphate. It functions in the pathway sulfur metabolism; hydrogen sulfide biosynthesis; sulfite from sulfate: step 1/3. In terms of biological role, with CysD forms the ATP sulfurylase (ATPS) that catalyzes the adenylation of sulfate producing adenosine 5'-phosphosulfate (APS) and diphosphate, the first enzymatic step in sulfur assimilation pathway. APS synthesis involves the formation of a high-energy phosphoric-sulfuric acid anhydride bond driven by GTP hydrolysis by CysN coupled to ATP hydrolysis by CysD. This is Sulfate adenylyltransferase subunit 1 from Tolumonas auensis (strain DSM 9187 / NBRC 110442 / TA 4).